A 191-amino-acid polypeptide reads, in one-letter code: Elongation factor P (191 aa).

An N6-(3,6-diaminohexanoyl)-5-hydroxylysine modification is found at K34.

It belongs to the elongation factor P family. Post-translationally, may be beta-lysylated on the epsilon-amino group of Lys-34 by the combined action of EpmA and EpmB, and then hydroxylated on the C5 position of the same residue by EpmC (if this protein is present). Lysylation is critical for the stimulatory effect of EF-P on peptide-bond formation. The lysylation moiety may extend toward the peptidyltransferase center and stabilize the terminal 3-CCA end of the tRNA. Hydroxylation of the C5 position on Lys-34 may allow additional potential stabilizing hydrogen-bond interactions with the P-tRNA.

Its subcellular location is the cytoplasm. The protein operates within protein biosynthesis; polypeptide chain elongation. Involved in peptide bond synthesis. Alleviates ribosome stalling that occurs when 3 or more consecutive Pro residues or the sequence PPG is present in a protein, possibly by augmenting the peptidyl transferase activity of the ribosome. Modification of Lys-34 is required for alleviation. In Marinomonas sp. (strain MWYL1), this protein is Elongation factor P.